The sequence spans 467 residues: Phosphoglucosamine mutase (467 aa).

Serine 120 functions as the Phosphoserine intermediate in the catalytic mechanism. The Mg(2+) site is built by serine 120, aspartate 261, aspartate 263, and aspartate 265. Serine 120 bears the Phosphoserine mark.

The protein belongs to the phosphohexose mutase family. Requires Mg(2+) as cofactor. In terms of processing, activated by phosphorylation.

It carries out the reaction alpha-D-glucosamine 1-phosphate = D-glucosamine 6-phosphate. Catalyzes the conversion of glucosamine-6-phosphate to glucosamine-1-phosphate. This Parafrankia sp. (strain EAN1pec) protein is Phosphoglucosamine mutase.